Here is a 249-residue protein sequence, read N- to C-terminus: MADS-box transcription factor 18 (249 aa).

Residues 1 to 61 (MGRGPVQLRR…GKLYEFSSHS (61 aa)) form the MADS-box domain. In terms of domain architecture, K-box spans 88-179 (QENWGDEYGI…KLMETEKEKN (92 aa)). Residues 184-249 (NTNREEQNGA…PPWMLRTSHT (66 aa)) are disordered. Over residues 210 to 236 (PTTNNSQSQPRGSGESEAQPSPAQAGN) the composition is skewed to polar residues.

Widely expressed. Transcripts accumulate to higher levels in organs that retain meristematic characteristics: in the apical meristem and in the meristematic leaf primordia formed on its flank; in the developing panicle at the early stage of rachis-branch primordia differentiation; in the procambium of the rachis branches and in all floral organ primordia.

The protein resides in the nucleus. Functionally, probable transcription factor. The protein is MADS-box transcription factor 18 (MADS18) of Oryza sativa subsp. indica (Rice).